The primary structure comprises 99 residues: Large ribosomal subunit protein bL27 (99 aa).

Residues 1 to 12 constitute a propeptide that is removed on maturation; sequence MMINNLEALKLF. Residues 15 to 36 are disordered; the sequence is HKGGGSTANGRNSAGRRLGAKR.

Belongs to the bacterial ribosomal protein bL27 family. Post-translationally, the N-terminus is cleaved by ribosomal processing cysteine protease Prp.

The polypeptide is Large ribosomal subunit protein bL27 (Lactobacillus johnsonii (strain CNCM I-12250 / La1 / NCC 533)).